The chain runs to 485 residues: Cysteine--tRNA ligase (485 aa).

Cys28 provides a ligand contact to Zn(2+). The short motif at Met30 to His40 is the 'HIGH' region element. Residues Cys212, His237, and Glu241 each contribute to the Zn(2+) site. The 'KMSKS' region signature appears at Lys269–Ser273. Lys272 is a binding site for ATP.

It belongs to the class-I aminoacyl-tRNA synthetase family. Monomer. Requires Zn(2+) as cofactor.

Its subcellular location is the cytoplasm. It catalyses the reaction tRNA(Cys) + L-cysteine + ATP = L-cysteinyl-tRNA(Cys) + AMP + diphosphate. The polypeptide is Cysteine--tRNA ligase (Bordetella bronchiseptica (strain ATCC BAA-588 / NCTC 13252 / RB50) (Alcaligenes bronchisepticus)).